Consider the following 125-residue polypeptide: uncharacterized protein (125 aa).

Residues 36 to 57 (EAKKAKEKQDSKTKDTDKKVDQ) form a disordered region. The chain crosses the membrane as a helical span at residues 92-112 (ITIFLLIVLVSAIMIGIYFGI).

The protein resides in the membrane. This is an uncharacterized protein from Mycoplasma pneumoniae (strain ATCC 29342 / M129 / Subtype 1) (Mycoplasmoides pneumoniae).